The following is a 356-amino-acid chain: Chorismate synthase (356 aa).

Residue Arg-46 participates in NADP(+) binding. FMN is bound by residues 122 to 124 (RSS), 234 to 235 (NG), Gly-274, 289 to 293 (KPTPS), and Arg-315.

This sequence belongs to the chorismate synthase family. Homotetramer. The cofactor is FMNH2.

It carries out the reaction 5-O-(1-carboxyvinyl)-3-phosphoshikimate = chorismate + phosphate. It participates in metabolic intermediate biosynthesis; chorismate biosynthesis; chorismate from D-erythrose 4-phosphate and phosphoenolpyruvate: step 7/7. In terms of biological role, catalyzes the anti-1,4-elimination of the C-3 phosphate and the C-6 proR hydrogen from 5-enolpyruvylshikimate-3-phosphate (EPSP) to yield chorismate, which is the branch point compound that serves as the starting substrate for the three terminal pathways of aromatic amino acid biosynthesis. This reaction introduces a second double bond into the aromatic ring system. In Campylobacter fetus subsp. fetus (strain 82-40), this protein is Chorismate synthase.